The following is a 480-amino-acid chain: UDP-N-acetylmuramoylalanine--D-glutamate ligase (480 aa).

120–126 (GTNGKTT) is a binding site for ATP.

The protein belongs to the MurCDEF family.

It localises to the cytoplasm. It catalyses the reaction UDP-N-acetyl-alpha-D-muramoyl-L-alanine + D-glutamate + ATP = UDP-N-acetyl-alpha-D-muramoyl-L-alanyl-D-glutamate + ADP + phosphate + H(+). It functions in the pathway cell wall biogenesis; peptidoglycan biosynthesis. Its function is as follows. Cell wall formation. Catalyzes the addition of glutamate to the nucleotide precursor UDP-N-acetylmuramoyl-L-alanine (UMA). The chain is UDP-N-acetylmuramoylalanine--D-glutamate ligase from Nocardia farcinica (strain IFM 10152).